Here is a 273-residue protein sequence, read N- to C-terminus: 4-diphosphocytidyl-2-C-methyl-D-erythritol kinase (273 aa).

Residue K9 is part of the active site. 90–100 contributes to the ATP binding site; sequence PVAAGLGGGSA. The active site involves D129.

This sequence belongs to the GHMP kinase family. IspE subfamily.

It catalyses the reaction 4-CDP-2-C-methyl-D-erythritol + ATP = 4-CDP-2-C-methyl-D-erythritol 2-phosphate + ADP + H(+). Its pathway is isoprenoid biosynthesis; isopentenyl diphosphate biosynthesis via DXP pathway; isopentenyl diphosphate from 1-deoxy-D-xylulose 5-phosphate: step 3/6. Catalyzes the phosphorylation of the position 2 hydroxy group of 4-diphosphocytidyl-2C-methyl-D-erythritol. The polypeptide is 4-diphosphocytidyl-2-C-methyl-D-erythritol kinase (Erythrobacter litoralis (strain HTCC2594)).